The primary structure comprises 207 residues: MQNFKELNEKIAWQKVDNLLPVIIQDAKTCEVLMLGFMNNEALEKSLESGKVVFFSRTKQRLWMKGEESGNFLNIIDLSLDCDNDTLLILANPVGPTCHTGDISCFEKISKNADFVFLARLEKLINARKNADENTSYTAKLFKSGTKRIAQKVGEEGVETALAATVKDKEELICEAADLMYHLSVLLADANLSFSDVISKLKERHKA.

The interval 1–117 (MQNFKELNEK…KISKNADFVF (117 aa)) is phosphoribosyl-AMP cyclohydrolase. Positions 118–207 (LARLEKLINA…ISKLKERHKA (90 aa)) are phosphoribosyl-ATP pyrophosphohydrolase.

This sequence in the N-terminal section; belongs to the PRA-CH family. The protein in the C-terminal section; belongs to the PRA-PH family.

It is found in the cytoplasm. It catalyses the reaction 1-(5-phospho-beta-D-ribosyl)-ATP + H2O = 1-(5-phospho-beta-D-ribosyl)-5'-AMP + diphosphate + H(+). The catalysed reaction is 1-(5-phospho-beta-D-ribosyl)-5'-AMP + H2O = 1-(5-phospho-beta-D-ribosyl)-5-[(5-phospho-beta-D-ribosylamino)methylideneamino]imidazole-4-carboxamide. It functions in the pathway amino-acid biosynthesis; L-histidine biosynthesis; L-histidine from 5-phospho-alpha-D-ribose 1-diphosphate: step 2/9. The protein operates within amino-acid biosynthesis; L-histidine biosynthesis; L-histidine from 5-phospho-alpha-D-ribose 1-diphosphate: step 3/9. The sequence is that of Histidine biosynthesis bifunctional protein HisIE (hisI) from Campylobacter jejuni subsp. jejuni serotype O:2 (strain ATCC 700819 / NCTC 11168).